Reading from the N-terminus, the 328-residue chain is Transcription factor bHLH84 (328 aa).

The tract at residues 145 to 248 (QCESSKKRTR…ASRGAATDPQ (104 aa)) is disordered. A compositionally biased stretch (basic and acidic residues) spans 220-229 (LSKEDGEDSK). Positions 243 to 292 (AATDPQSLYARKRRERINERLRILQHLVPNGTKVDISTMLEEAVQYVKFL) constitute a bHLH domain.

Belongs to the bHLH protein family. Homodimer.

It is found in the nucleus. This Arabidopsis thaliana (Mouse-ear cress) protein is Transcription factor bHLH84 (BHLH84).